Reading from the N-terminus, the 542-residue chain is Importin subunit alpha-1 (542 aa).

Residues 1 to 29 are disordered; sequence MSASSRFIPEHRRQNYKGKGTFQADELRR. Residues 1–60 enclose the IBB domain; the sequence is MSASSRFIPEHRRQNYKGKGTFQADELRRRRETQQIEIRKQKREENLNKRRNLVDVQEPA. 8 ARM repeats span residues 114–155, 156–197, 198–240, 241–282, 283–324, 325–366, 367–408, and 409–453; these read IQKV…SSNQ, THVV…SPMC, RDHV…KNPQ, PDWN…ANEK, IQAI…DDVQ, TQVI…NSSQ, IQYV…GARR, and PDQI…GELD.

The protein belongs to the importin alpha family. In terms of assembly, interacts with pap1.

The protein resides in the nucleus. In terms of biological role, binds specifically and directly to substrates containing either a simple or bipartite NLS motif. Promotes docking of import substrates to the nuclear envelope. Seems to act as a cytosolic receptor for both simple and bipartite NLS motifs. Has an essential role in mitotic chromosome condensation. Involved in nuclear protein import. Required for efficient nuclear import of both an SV40 nuclear localization signal-containing reporter protein and the pap1 component of the stress response MAP kinase pathway. Required for proper mitotic progression. This Schizosaccharomyces pombe (strain 972 / ATCC 24843) (Fission yeast) protein is Importin subunit alpha-1 (cut15).